We begin with the raw amino-acid sequence, 151 residues long: MAKINFYAEGVSLPRIRRRIVGKWIAEVCSRYGKAVGEISYLFCDDEYILKANQEFLDHDYYTDIITFDSCEADTVNGDLLISLDTVRSNARALDLRYEDELHRVIIHGILHLCGLKDKSKKDEAQMRAAEEKALVMLRETIGSELSLLHT.

Zn(2+) contacts are provided by His108, His112, and Asp118.

The protein belongs to the endoribonuclease YbeY family. It depends on Zn(2+) as a cofactor.

The protein localises to the cytoplasm. Its function is as follows. Single strand-specific metallo-endoribonuclease involved in late-stage 70S ribosome quality control and in maturation of the 3' terminus of the 16S rRNA. In Porphyromonas gingivalis (strain ATCC BAA-308 / W83), this protein is Endoribonuclease YbeY.